A 205-amino-acid chain; its full sequence is Regulator of G-protein signaling 4 (205 aa).

Residues Cys-2, Cys-12, and Cys-95 are each lipidated (S-palmitoyl cysteine). The RGS domain occupies 62-178 (SLENLISHEC…LKSRFYLDLV (117 aa)).

In terms of processing, palmitoylated on Cys-2 and/or Cys-12. Phosphorylated by cyclic GMP-dependent protein kinase.

Its function is as follows. Inhibits signal transduction by increasing the GTPase activity of G protein alpha subunits thereby driving them into their inactive GDP-bound form. Activity on G(z)-alpha is inhibited by phosphorylation of the G-protein. Activity on G(z)-alpha and G(i)-alpha-1 is inhibited by palmitoylation of the G-protein. This chain is Regulator of G-protein signaling 4 (RGS4), found in Bos taurus (Bovine).